The sequence spans 803 residues: Exocyst complex component 6 (803 aa).

Belongs to the SEC15 family. In terms of assembly, the exocyst complex is composed of EXOC1, EXOC2, EXOC3, EXOC4, EXOC5, EXOC6, EXOC7 and EXOC8. Interacts with CNTRL. Interacts with RAB11A in a GTP-dependent manner.

The protein localises to the cytoplasm. It localises to the perinuclear region. It is found in the cell projection. The protein resides in the growth cone. Its subcellular location is the midbody. The protein localises to the midbody ring. Its function is as follows. Component of the exocyst complex involved in the docking of exocytic vesicles with fusion sites on the plasma membrane. Together with RAB11A, RAB3IP, RAB8A, PARD3, PRKCI, ANXA2, CDC42 and DNMBP promotes transcytosis of PODXL to the apical membrane initiation sites (AMIS), apical surface formation and lumenogenesis. The polypeptide is Exocyst complex component 6 (EXOC6) (Canis lupus familiaris (Dog)).